A 59-amino-acid polypeptide reads, in one-letter code: Potassium channel toxin alpha-KTx 1.14 (59 aa).

The signal sequence occupies residues Met-1–Gly-22. Pyrrolidone carboxylic acid is present on Gln-23. 3 cysteine pairs are disulfide-bonded: Cys-29-Cys-50, Cys-35-Cys-55, and Cys-39-Cys-57.

It belongs to the short scorpion toxin superfamily. Potassium channel inhibitor family. Alpha-KTx 01 subfamily. Expressed by the venom gland.

Its subcellular location is the secreted. In terms of biological role, potent blocker of both large-conductance calcium-activated potassium channels (KCa1.1/KCNMA1) and voltage-gated potassium channels (Kv1.3/KCNA3 and ERG1/Kv11.1/KCNH2). This Olivierus martensii (Manchurian scorpion) protein is Potassium channel toxin alpha-KTx 1.14.